We begin with the raw amino-acid sequence, 313 residues long: Cytochrome c oxidase assembly protein COX18, mitochondrial (313 aa).

The helical transmembrane segment at Ser-209–Ile-229 threads the bilayer. The Mitochondrial matrix segment spans residues Asn-230–Ser-272. A helical transmembrane segment spans residues Thr-273–Thr-293. The Mitochondrial intermembrane segment spans residues Ser-294–Arg-313.

Belongs to the OXA1/ALB3/YidC family.

Its subcellular location is the mitochondrion inner membrane. Functionally, required for the insertion of integral membrane proteins into the mitochondrial inner membrane. Essential for the activity and assembly of cytochrome c oxidase. In Kluyveromyces lactis (strain ATCC 8585 / CBS 2359 / DSM 70799 / NBRC 1267 / NRRL Y-1140 / WM37) (Yeast), this protein is Cytochrome c oxidase assembly protein COX18, mitochondrial (COX18).